The following is a 3095-amino-acid chain: HD protein homolog (3095 aa).

Disordered stretches follow at residues 105 to 197 (PHQH…NGNA), 536 to 561 (QQQQ…TMSG), 1312 to 1371 (PPQQ…STVI), 1509 to 1547 (KSTS…TTPS), and 2005 to 2037 (KELT…KEEE). Residues 115–139 (STNLTDHLSQNSVTPSVPTTPNYQQ) are compositionally biased toward polar residues. 2 stretches are compositionally biased toward low complexity: residues 140-197 (SPST…NGNA) and 536-551 (QQQQ…QQQQ). Residues 552 to 561 (HNLTSSTMSG) are compositionally biased toward polar residues. Composition is skewed to low complexity over residues 1315–1368 (QQQQ…LNNS), 1510–1547 (STSS…TTPS), and 2008–2018 (TNNNNNNNNNI).

Belongs to the huntingtin family.

It is found in the cytoplasm. Its subcellular location is the nucleus. Its function is as follows. May play a role in microtubule-mediated transport or vesicle function. In Dictyostelium discoideum (Social amoeba), this protein is HD protein homolog (htt).